The sequence spans 62 residues: Large ribosomal subunit protein uL30 (62 aa).

The protein belongs to the universal ribosomal protein uL30 family. As to quaternary structure, part of the 50S ribosomal subunit.

The polypeptide is Large ribosomal subunit protein uL30 (Dinoroseobacter shibae (strain DSM 16493 / NCIMB 14021 / DFL 12)).